A 375-amino-acid polypeptide reads, in one-letter code: DNA replication and repair protein RecF (375 aa).

30–37 (GKNAQGKT) contributes to the ATP binding site.

This sequence belongs to the RecF family.

It is found in the cytoplasm. Its function is as follows. The RecF protein is involved in DNA metabolism; it is required for DNA replication and normal SOS inducibility. RecF binds preferentially to single-stranded, linear DNA. It also seems to bind ATP. In Lactobacillus acidophilus (strain ATCC 700396 / NCK56 / N2 / NCFM), this protein is DNA replication and repair protein RecF.